The following is a 252-amino-acid chain: Transmembrane ascorbate-dependent reductase CYB561 (252 aa).

Residue Met-1 is modified to N-acetylmethionine. Over 1 to 17 (MEGPASPAPAPGALPYY) the chain is Cytoplasmic. Residues 18 to 38 (VAFSQLLGLTVVAMTGAWLGM) traverse the membrane as a helical segment. In terms of domain architecture, Cytochrome b561 spans 20–221 (FSQLLGLTVV…FATVVLYILT (202 aa)). The Vesicular segment spans residues 39-52 (YRGGIAWESALQFN). Residues 53-73 (VHPLCMVIGLVFLQGDALLVY) form a helical membrane-spanning segment. Heme b-binding residues include His-54, Arg-74, and Lys-81. At 74–86 (RVFRNEAKRTTKV) the chain is on the cytoplasmic side. Lys-81 and Lys-85 together coordinate L-ascorbate. Residues 87–107 (LHGLLHVFAFVIALVGLVAVF) traverse the membrane as a helical segment. Residues His-88, 117–120 (DLYS), and His-122 each bind heme b. Residues 108-125 (EHHRKKGYADLYSLHSWC) lie on the Vesicular side of the membrane. Residues 126 to 146 (GILVFALFFAQWLVGFSFFLF) form a helical membrane-spanning segment. At 147-159 (PGASFSLRSRYRP) the chain is on the cytoplasmic side. L-ascorbate is bound at residue Arg-154. Residues 160–180 (QHVFFGAAIFLLSVATALLGL) form a helical membrane-spanning segment. Heme b is bound by residues His-161 and Glu-182. Residues 181-199 (KEALLFELGTKYSTFEPEG) are Vesicular-facing. A helical membrane pass occupies residues 200–220 (VLANVLGLLLAAFATVVLYIL). Topologically, residues 221 to 252 (TRADWKRPLQAEEQALSMDFKTLTEGDSPSSQ) are cytoplasmic. Lys-226 contributes to the heme b binding site. Residues Ser-248 and Ser-250 each carry the phosphoserine modification.

Requires heme b as cofactor.

The protein resides in the cytoplasmic vesicle. Its subcellular location is the secretory vesicle. It is found in the chromaffin granule membrane. It carries out the reaction monodehydro-L-ascorbate radical(out) + L-ascorbate(in) = monodehydro-L-ascorbate radical(in) + L-ascorbate(out). Its function is as follows. Transmembrane reductase that uses ascorbate as an electron donor in the cytoplasm and transfers electrons across membranes to reduce monodehydro-L-ascorbate radical in the lumen of secretory vesicles. It is therefore involved the regeneration and homeostasis within secretory vesicles of ascorbate which in turn provides reducing equivalents needed to support the activity of intravesicular enzymes. The chain is Transmembrane ascorbate-dependent reductase CYB561 (CYB561) from Ovis aries (Sheep).